The sequence spans 567 residues: Urease subunit alpha (567 aa).

Positions 129–567 constitute a Urease domain; the sequence is GGIDAHIHFI…LPLAQRYFLF (439 aa). The Ni(2+) site is built by H134, H136, and K217. Position 217 is an N6-carboxylysine (K217). A substrate-binding site is contributed by H219. Residues H246 and H272 each contribute to the Ni(2+) site. Catalysis depends on H320, which acts as the Proton donor. Residue D360 participates in Ni(2+) binding.

This sequence belongs to the metallo-dependent hydrolases superfamily. Urease alpha subunit family. In terms of assembly, heterotrimer of UreA (gamma), UreB (beta) and UreC (alpha) subunits. Three heterotrimers associate to form the active enzyme. Ni cation serves as cofactor. Post-translationally, carboxylation allows a single lysine to coordinate two nickel ions.

The protein localises to the cytoplasm. It catalyses the reaction urea + 2 H2O + H(+) = hydrogencarbonate + 2 NH4(+). The protein operates within nitrogen metabolism; urea degradation; CO(2) and NH(3) from urea (urease route): step 1/1. The protein is Urease subunit alpha of Hahella chejuensis (strain KCTC 2396).